The sequence spans 1235 residues: STE20-like serine/threonine-protein kinase (1235 aa).

A Phosphoserine modification is found at Ser-14. One can recognise a Protein kinase domain in the interval 34–292; the sequence is WEIIGELGDG…TSQLLQHPFV (259 aa). ATP-binding positions include 40 to 48 and Lys-63; that span reads LGDGAFGKV. Asp-155 functions as the Proton acceptor in the catalytic mechanism. Position 183 is a phosphothreonine (Thr-183). Position 189 is a phosphoserine (Ser-189). The tract at residues 309–351 is disordered; that stretch reads AEVTEEVEDGKEEDEEEETENSLPIPASKRASSDLSIASSEED. A compositionally biased stretch (acidic residues) spans 312–328; sequence TEEVEDGKEEDEEEETE. Ser-330, Ser-340, Ser-341, Ser-344, Ser-347, Ser-348, Ser-354, and Ser-372 each carry phosphoserine. Disordered stretches follow at residues 363–393 and 421–441; these read VSEK…PEKA and ENER…DQET. The segment covering 421–432 has biased composition (basic and acidic residues); that stretch reads ENEREKRPKLEN. Residue Ser-518 is modified to Phosphoserine. Positions 519-539 are disordered; sequence EVGLTKEDTQEKLGEDDKTQK. Residues 522 to 539 show a composition bias toward basic and acidic residues; that stretch reads LTKEDTQEKLGEDDKTQK. Position 565 is a phosphoserine (Ser-565). At Thr-569 the chain carries Phosphothreonine. A phosphoserine mark is found at Ser-571, Ser-647, Ser-655, and Ser-667. Residues 613-760 are disordered; that stretch reads EGKNKEQAIN…GTGSTADTSS (148 aa). A compositionally biased stretch (acidic residues) spans 638–650; that stretch reads EGEEITESSSTEE. Positions 679–695 are enriched in basic and acidic residues; sequence IDKEKKEIPVSIKKEPE. The span at 749–760 shows a compositional bias: low complexity; that stretch reads DSGTGSTADTSS. Residues Ser-777 and Ser-779 each carry the phosphoserine modification. Thr-814 bears the Phosphothreonine mark. A Phosphoserine modification is found at Ser-818. A coiled-coil region spans residues 826 to 1069; that stretch reads LRRQELRELR…LKNRQTQERA (244 aa). The UVR domain maps to 875 to 910; sequence DQEIENLEKQQKQTIERLEQEHTNRLRDEAKRIKGE. Thr-1097 is subject to Phosphothreonine. A coiled-coil region spans residues 1109–1183; the sequence is AAQEEKRQKN…ELKEWREKLR (75 aa).

It belongs to the protein kinase superfamily. STE Ser/Thr protein kinase family. STE20 subfamily. Proteolytically cleaved by caspase-3. In terms of processing, autophosphorylated. As to expression, ubiquitously expressed. Highest expression is found in heart and in skeletal muscle.

It is found in the cytoplasm. It catalyses the reaction L-seryl-[protein] + ATP = O-phospho-L-seryl-[protein] + ADP + H(+). The catalysed reaction is L-threonyl-[protein] + ATP = O-phospho-L-threonyl-[protein] + ADP + H(+). Functionally, mediates apoptosis and actin stress fiber dissolution. This chain is STE20-like serine/threonine-protein kinase (SLK), found in Homo sapiens (Human).